Consider the following 260-residue polypeptide: Ribosomal RNA small subunit methyltransferase A (260 aa).

The S-adenosyl-L-methionine site is built by Leu23, Gly48, Glu69, Asp94, and Asn110.

Belongs to the class I-like SAM-binding methyltransferase superfamily. rRNA adenine N(6)-methyltransferase family. RsmA subfamily.

The protein resides in the cytoplasm. The enzyme catalyses adenosine(1518)/adenosine(1519) in 16S rRNA + 4 S-adenosyl-L-methionine = N(6)-dimethyladenosine(1518)/N(6)-dimethyladenosine(1519) in 16S rRNA + 4 S-adenosyl-L-homocysteine + 4 H(+). Its function is as follows. Specifically dimethylates two adjacent adenosines (A1518 and A1519) in the loop of a conserved hairpin near the 3'-end of 16S rRNA in the 30S particle. May play a critical role in biogenesis of 30S subunits. The chain is Ribosomal RNA small subunit methyltransferase A from Thermotoga neapolitana (strain ATCC 49049 / DSM 4359 / NBRC 107923 / NS-E).